A 197-amino-acid chain; its full sequence is UPF0314 protein NGR_c32320 (197 aa).

The next 3 helical transmembrane spans lie at 16-36 (WIWL…QHLM), 66-86 (WYTP…YLLL), and 152-172 (LPVA…GWII).

Belongs to the UPF0314 family.

Its subcellular location is the cell membrane. The chain is UPF0314 protein NGR_c32320 from Sinorhizobium fredii (strain NBRC 101917 / NGR234).